Consider the following 279-residue polypeptide: RxLR effector protein Avh331 (279 aa).

Positions 1-20 are cleaved as a signal peptide; sequence MMQWSAILIRTCFSGSGGEA. The RxLR-dEER motif lies at 86 to 106; sequence RSLRSQATNVDDDANVSIENR. Residue asparagine 100 is glycosylated (N-linked (GlcNAc...) asparagine). Positions 129–147 are W1 motif; sequence ANKLWLMADVDPKSAFKLL. The Y1 motif stretch occupies residues 153-174; it reads GVRFIDNPKMLQWLKFTKAYLD. The tract at residues 178 to 208 is l motif; it reads SGFGETSAHALLYEKIGGPDLSLLLLSLKDA. A W2 motif region spans residues 222–240; sequence QFGMWHDARIEPEQLAQTV. The segment at 250-271 is Y2 motif; it reads PKNDPKLQVIDDYAKYHRKHRK.

This sequence belongs to the RxLR effector family.

The protein resides in the secreted. The protein localises to the host cell. Its function is as follows. Effector that suppresses the host mitogen-activated protein kinase (MAPK)-based plant defense activated by the Phytophthora elicitor to promote colonization of the Phytophthora pathogen. Neither directly inhibits MAPK kinase activity nor interacts with MAPK proteins but acts downstream by suppressing transcriptional activation of resistance marker genes such as FRK1, WRKY22 and WRKY29. Confers avirulence in the presence of resistance protein Rps1k in host. This is RxLR effector protein Avh331 from Phytophthora sojae (strain P6497) (Soybean stem and root rot agent).